The following is a 120-amino-acid chain: Immunoglobulin kappa variable 2-112 (120 aa).

An N-terminal signal peptide occupies residues 1–20; sequence MRCSLQFLGVLMFWISGVSG. Residues 21-43 form a framework-1 region; sequence DIVITQDELSNPVTSGESVSISC. The cysteines at positions 43 and 113 are disulfide-linked. Residues 44–59 form a complementarity-determining-1 region; sequence RSSKSLLYKDGKTYLN. Residues 60–74 form a framework-2 region; it reads WFLQRPGQSPQLLIY. A complementarity-determining-2 region spans residues 75 to 81; the sequence is LMSTRAS. The framework-3 stretch occupies residues 82–113; sequence GVSDRFSGSGSGTDFTLEISRVKAEDVGVYYC. Positions 114-120 are complementarity-determining-3; the sequence is QQLVEYP.

This chain is Immunoglobulin kappa variable 2-112, found in Mus musculus (Mouse).